Consider the following 248-residue polypeptide: ATP synthase subunit a (248 aa).

Helical transmembrane passes span 34–54, 91–111, 121–141, 147–167, 196–216, and 220–240; these read TNAT…LVFG, YFPY…LGLL, IAVT…LGFV, FLGL…LAVI, VFAA…AITA, and LEVL…CVYL.

It belongs to the ATPase A chain family. In terms of assembly, F-type ATPases have 2 components, CF(1) - the catalytic core - and CF(0) - the membrane proton channel. CF(1) has five subunits: alpha(3), beta(3), gamma(1), delta(1), epsilon(1). CF(0) has three main subunits: a(1), b(2) and c(9-12). The alpha and beta chains form an alternating ring which encloses part of the gamma chain. CF(1) is attached to CF(0) by a central stalk formed by the gamma and epsilon chains, while a peripheral stalk is formed by the delta and b chains.

The protein localises to the cell inner membrane. Functionally, key component of the proton channel; it plays a direct role in the translocation of protons across the membrane. This is ATP synthase subunit a from Paracoccus denitrificans (strain Pd 1222).